The following is a 901-amino-acid chain: Protein translocase subunit SecA (901 aa).

ATP contacts are provided by residues Gln87, Gly105 to Thr109, and Asp512. Zn(2+) is bound by residues Cys885, Cys887, Cys896, and His897.

Belongs to the SecA family. Monomer and homodimer. Part of the essential Sec protein translocation apparatus which comprises SecA, SecYEG and auxiliary proteins SecDF-YajC and YidC. Zn(2+) serves as cofactor.

The protein resides in the cell inner membrane. It is found in the cytoplasm. It carries out the reaction ATP + H2O + cellular proteinSide 1 = ADP + phosphate + cellular proteinSide 2.. Part of the Sec protein translocase complex. Interacts with the SecYEG preprotein conducting channel. Has a central role in coupling the hydrolysis of ATP to the transfer of proteins into and across the cell membrane, serving both as a receptor for the preprotein-SecB complex and as an ATP-driven molecular motor driving the stepwise translocation of polypeptide chains across the membrane. The sequence is that of Protein translocase subunit SecA from Salmonella enteritidis PT4 (strain P125109).